The following is a 247-amino-acid chain: 1-(5-phosphoribosyl)-5-[(5-phosphoribosylamino)methylideneamino] imidazole-4-carboxamide isomerase (247 aa).

Asp-8 serves as the catalytic Proton acceptor. Asp-129 (proton donor) is an active-site residue.

The protein belongs to the HisA/HisF family.

Its subcellular location is the cytoplasm. The enzyme catalyses 1-(5-phospho-beta-D-ribosyl)-5-[(5-phospho-beta-D-ribosylamino)methylideneamino]imidazole-4-carboxamide = 5-[(5-phospho-1-deoxy-D-ribulos-1-ylimino)methylamino]-1-(5-phospho-beta-D-ribosyl)imidazole-4-carboxamide. The protein operates within amino-acid biosynthesis; L-histidine biosynthesis; L-histidine from 5-phospho-alpha-D-ribose 1-diphosphate: step 4/9. This Solidesulfovibrio magneticus (strain ATCC 700980 / DSM 13731 / RS-1) (Desulfovibrio magneticus) protein is 1-(5-phosphoribosyl)-5-[(5-phosphoribosylamino)methylideneamino] imidazole-4-carboxamide isomerase.